A 706-amino-acid chain; its full sequence is Serotransferrin (706 aa).

Residues 1–19 (MRLAIRALLACAVLGLCLA) form the signal peptide. 2 Transferrin-like domains span residues 23 to 349 (VRWC…NLRE) and 363 to 691 (VKWC…NLRQ). Cystine bridges form between Cys26–Cys64 and Cys36–Cys55. Arg40 is modified (dimethylated arginine). 2 residues coordinate Fe(3+): Asp79 and Tyr111. 5 cysteine pairs are disulfide-bonded: Cys134–Cys215, Cys174–Cys190, Cys177–Cys198, Cys187–Cys200, and Cys248–Cys262. Hydrogencarbonate-binding residues include Thr136, Arg140, Ala142, and Gly143. Tyr209 contributes to the Fe(3+) binding site. Fe(3+) is bound at residue His270. 11 disulfides stabilise this stretch: Cys360–Cys623, Cys366–Cys398, Cys376–Cys389, Cys423–Cys701, Cys441–Cys664, Cys474–Cys550, Cys498–Cys692, Cys508–Cys522, Cys519–Cys533, Cys590–Cys604, and Cys642–Cys647. Ser391 carries the phosphoserine modification. Residues Asp413 and Tyr449 each contribute to the Fe(3+) site. Positions 476, 480, 482, and 483 each coordinate hydrogencarbonate. Asn515 carries N-linked (GlcNAc...) asparagine glycosylation. Tyr544 contacts Fe(3+). His612 contacts Fe(3+). Phosphoserine is present on Ser693.

It belongs to the transferrin family. As to quaternary structure, monomer. Part of a complex composed of SLC40A1/ferroportin, TF/transferrin and HEPH/hephaestin that transfers iron from cells to transferrin. Expressed by the liver and secreted in plasma.

It localises to the secreted. Its function is as follows. Transferrins are iron binding transport proteins which can bind two Fe(3+) ions in association with the binding of an anion, usually bicarbonate. It is responsible for the transport of iron from sites of absorption and heme degradation to those of storage and utilization. Serum transferrin may also have a further role in stimulating cell proliferation. In Equus caballus (Horse), this protein is Serotransferrin (TF).